A 206-amino-acid chain; its full sequence is Urease accessory protein UreG (206 aa).

Residue 11 to 18 participates in GTP binding; the sequence is GPVGSGKT.

The protein belongs to the SIMIBI class G3E GTPase family. UreG subfamily. As to quaternary structure, homodimer. UreD, UreF and UreG form a complex that acts as a GTP-hydrolysis-dependent molecular chaperone, activating the urease apoprotein by helping to assemble the nickel containing metallocenter of UreC. The UreE protein probably delivers the nickel.

Its subcellular location is the cytoplasm. Its function is as follows. Facilitates the functional incorporation of the urease nickel metallocenter. This process requires GTP hydrolysis, probably effectuated by UreG. In Mycolicibacterium gilvum (strain PYR-GCK) (Mycobacterium gilvum (strain PYR-GCK)), this protein is Urease accessory protein UreG.